Here is a 473-residue protein sequence, read N- to C-terminus: Endoglucanase B (473 aa).

An N-terminal signal peptide occupies residues 1–17; it reads MKFLNTFSLLSLAIIGS. Positions 18–367 are catalytic; the sequence is KAMKNISSKE…GLIKGLGNSI (350 aa). The Proton donor role is filled by Glu-173. Residue Glu-295 is the Nucleophile of the active site. The linker stretch occupies residues 365–387; that stretch reads NSIKTRTTIRRTTTTTTSQSQPT. CBM10 domains follow at residues 391–427 and 436–473; these read SCFS…CGIK and ICWS…CGIY.

This sequence belongs to the glycosyl hydrolase 5 (cellulase A) family.

It carries out the reaction Endohydrolysis of (1-&gt;4)-beta-D-glucosidic linkages in cellulose, lichenin and cereal beta-D-glucans.. Rate of hydrolysis of cellulo-oligosaccharides increased with increasing chain length from cellotriose to cellopentaose. The protein is Endoglucanase B (CELB) of Neocallimastix patriciarum (Rumen fungus).